We begin with the raw amino-acid sequence, 447 residues long: Tubulin beta chain (447 aa).

GTP contacts are provided by Gln11, Glu69, Ser138, Gly142, Thr143, Gly144, Asn204, and Asn226. Glu69 is a Mg(2+) binding site. Residues 424 to 447 are disordered; sequence QYQEASVSEGEEEYDEEAPLEGEE. Residues 432-447 show a composition bias toward acidic residues; that stretch reads EGEEEYDEEAPLEGEE.

This sequence belongs to the tubulin family. Dimer of alpha and beta chains. A typical microtubule is a hollow water-filled tube with an outer diameter of 25 nm and an inner diameter of 15 nM. Alpha-beta heterodimers associate head-to-tail to form protofilaments running lengthwise along the microtubule wall with the beta-tubulin subunit facing the microtubule plus end conferring a structural polarity. Microtubules usually have 13 protofilaments but different protofilament numbers can be found in some organisms and specialized cells. It depends on Mg(2+) as a cofactor.

It is found in the cytoplasm. The protein localises to the cytoskeleton. In terms of biological role, tubulin is the major constituent of microtubules, a cylinder consisting of laterally associated linear protofilaments composed of alpha- and beta-tubulin heterodimers. Microtubules grow by the addition of GTP-tubulin dimers to the microtubule end, where a stabilizing cap forms. Below the cap, tubulin dimers are in GDP-bound state, owing to GTPase activity of alpha-tubulin. This chain is Tubulin beta chain (TUB1), found in Dothistroma septosporum (Red band needle blight fungus).